Reading from the N-terminus, the 139-residue chain is MRHARGYRRLNRTHEHRKALFANMAGSLIEHEQIKTTLPKAKELRPIIEKLITLAKRGDLHARRQAAAQLKEDRHVARLFEILGPRYAERAGGYVRVLKAGFRYGDMAPMAIIEFVDRDPNAKGAADKARTAAEEALEE.

It belongs to the bacterial ribosomal protein bL17 family. In terms of assembly, part of the 50S ribosomal subunit. Contacts protein L32.

The sequence is that of Large ribosomal subunit protein bL17 from Cereibacter sphaeroides (strain ATCC 17029 / ATH 2.4.9) (Rhodobacter sphaeroides).